Consider the following 889-residue polypeptide: DNA mismatch repair protein MutS (889 aa).

A compositionally biased stretch (low complexity) spans 1–17 (MPKTNSSAASTNANPSS). The disordered stretch occupies residues 1 to 20 (MPKTNSSAASTNANPSSLQQ). 640–647 (GPNMGGKS) serves as a coordination point for ATP.

It belongs to the DNA mismatch repair MutS family.

This protein is involved in the repair of mismatches in DNA. It is possible that it carries out the mismatch recognition step. This protein has a weak ATPase activity. This is DNA mismatch repair protein MutS from Pseudoalteromonas atlantica (strain T6c / ATCC BAA-1087).